Consider the following 198-residue polypeptide: Large ribosomal subunit protein bL9 (198 aa).

Positions 156-166 are enriched in basic and acidic residues; that stretch reads RGEDISTRQED. The interval 156 to 198 is disordered; that stretch reads RGEDISTRQEDQDAAAEALAAAGEFFDPEAHNDGEQEEEAGDK.

It belongs to the bacterial ribosomal protein bL9 family.

Functionally, binds to the 23S rRNA. The protein is Large ribosomal subunit protein bL9 of Rhodopseudomonas palustris (strain BisB18).